The sequence spans 343 residues: Dihydroorotase (343 aa).

Positions 13 and 15 each coordinate Zn(2+). Residues 15–17 (HLR) and N41 each bind substrate. 3 residues coordinate Zn(2+): K99, H136, and H174. N6-carboxylysine is present on K99. H136 serves as a coordination point for substrate. L219 contributes to the substrate binding site. A Zn(2+)-binding site is contributed by D247. The active site involves D247. Substrate-binding residues include H251 and A263.

It belongs to the metallo-dependent hydrolases superfamily. DHOase family. Class II DHOase subfamily. As to quaternary structure, homodimer. Zn(2+) serves as cofactor.

The catalysed reaction is (S)-dihydroorotate + H2O = N-carbamoyl-L-aspartate + H(+). It participates in pyrimidine metabolism; UMP biosynthesis via de novo pathway; (S)-dihydroorotate from bicarbonate: step 3/3. In terms of biological role, catalyzes the reversible cyclization of carbamoyl aspartate to dihydroorotate. This is Dihydroorotase from Shewanella oneidensis (strain ATCC 700550 / JCM 31522 / CIP 106686 / LMG 19005 / NCIMB 14063 / MR-1).